The following is a 787-amino-acid chain: Formate acetyltransferase (787 aa).

The 622-residue stretch at 8–629 (NIFEQAWDGF…GNSPVHKGVF (622 aa)) folds into the PFL domain. Cys416 functions as the S-acetylcysteine intermediate in the catalytic mechanism. Cys417 acts as the Cysteine radical intermediate in catalysis. Positions 645–774 (SPGANPSNKA…LTERVFHEVL (130 aa)) constitute a Glycine radical domain. Gly749 carries the glycine radical modification.

The protein belongs to the glycyl radical enzyme (GRE) family. PFL subfamily. Homodimer.

The protein resides in the cytoplasm. It catalyses the reaction formate + acetyl-CoA = pyruvate + CoA. Its pathway is fermentation; pyruvate fermentation; formate from pyruvate: step 1/1. The protein is Formate acetyltransferase (pfl) of Lactococcus lactis subsp. lactis (strain IL1403) (Streptococcus lactis).